We begin with the raw amino-acid sequence, 207 residues long: Small ribosomal subunit protein uS4 (207 aa).

The tract at residues 31–56 (KCKLDSKPGQHGRTSGARTSDYGNQL) is disordered. A compositionally biased stretch (polar residues) spans 42–53 (GRTSGARTSDYG). One can recognise an S4 RNA-binding domain in the interval 97–157 (ARLDNVVYRM…EKSKKQVRIV (61 aa)).

The protein belongs to the universal ribosomal protein uS4 family. As to quaternary structure, part of the 30S ribosomal subunit. Contacts protein S5. The interaction surface between S4 and S5 is involved in control of translational fidelity.

In terms of biological role, one of the primary rRNA binding proteins, it binds directly to 16S rRNA where it nucleates assembly of the body of the 30S subunit. With S5 and S12 plays an important role in translational accuracy. In Janthinobacterium sp. (strain Marseille) (Minibacterium massiliensis), this protein is Small ribosomal subunit protein uS4.